Reading from the N-terminus, the 258-residue chain is Trans-aconitate 2-methyltransferase (258 aa).

It belongs to the methyltransferase superfamily. Tam family.

It localises to the cytoplasm. It catalyses the reaction trans-aconitate + S-adenosyl-L-methionine = (E)-3-(methoxycarbonyl)pent-2-enedioate + S-adenosyl-L-homocysteine. In terms of biological role, catalyzes the S-adenosylmethionine monomethyl esterification of trans-aconitate. This Acidovorax sp. (strain JS42) protein is Trans-aconitate 2-methyltransferase.